A 220-amino-acid polypeptide reads, in one-letter code: Adenylate kinase (220 aa).

12-17 is a binding site for ATP; that stretch reads GAGKGT. An NMP region spans residues 32 to 62; the sequence is STGDIFRDIVKKENDELGKKIKEIMEKGELV. AMP contacts are provided by residues T33, R38, 60–62, 88–91, and Q95; these read ELV and GYPR. The segment at 129–166 is LID; the sequence is SRRICPKCGRIYNMISLPPKEDELCDDCKVKLVQRDDD. R130 is a binding site for ATP. Residues C133 and C136 each contribute to the Zn(2+) site. Position 139-140 (139-140) interacts with ATP; that stretch reads IY. Positions 153 and 156 each coordinate Zn(2+). AMP is bound by residues R163 and R174. I202 is a binding site for ATP.

It belongs to the adenylate kinase family. In terms of assembly, monomer.

Its subcellular location is the cytoplasm. The catalysed reaction is AMP + ATP = 2 ADP. It participates in purine metabolism; AMP biosynthesis via salvage pathway; AMP from ADP: step 1/1. Catalyzes the reversible transfer of the terminal phosphate group between ATP and AMP. Plays an important role in cellular energy homeostasis and in adenine nucleotide metabolism. This Thermotoga neapolitana protein is Adenylate kinase.